A 258-amino-acid polypeptide reads, in one-letter code: SufE-like protein 2, chloroplastic (258 aa).

The tract at residues methionine 1–threonine 32 is disordered. Polar residues predominate over residues leucine 15–threonine 32. Cysteine 122 acts as the Cysteine persulfide intermediate in catalysis.

The protein belongs to the SufE family. As to expression, highly expressed in flowers and pollen, and at low levels in roots, leaves and stems.

Its subcellular location is the plastid. It is found in the chloroplast. The protein operates within cofactor biosynthesis; iron-sulfur cluster biosynthesis. Functionally, participates in cysteine desulfurization mediated by NFS2. Can activate the cysteine desulfurase activity of NFS2 in vitro. Cysteine desulfurization mobilizes sulfur from L-cysteine to yield L-alanine and supplies the inorganic sulfur for iron-sulfur (Fe-S) cluster formation. The polypeptide is SufE-like protein 2, chloroplastic (SUFE2) (Arabidopsis thaliana (Mouse-ear cress)).